The sequence spans 184 residues: Adenine phosphoribosyltransferase (184 aa).

Belongs to the purine/pyrimidine phosphoribosyltransferase family. As to quaternary structure, homodimer.

It is found in the cytoplasm. The catalysed reaction is AMP + diphosphate = 5-phospho-alpha-D-ribose 1-diphosphate + adenine. Its pathway is purine metabolism; AMP biosynthesis via salvage pathway; AMP from adenine: step 1/1. Its function is as follows. Catalyzes a salvage reaction resulting in the formation of AMP, that is energically less costly than de novo synthesis. The polypeptide is Adenine phosphoribosyltransferase (Blochmanniella pennsylvanica (strain BPEN)).